A 396-amino-acid polypeptide reads, in one-letter code: Elongation factor Tu (396 aa).

The tr-type G domain occupies 10–206 (KPHCNIGTIG…AVDEFIPQPT (197 aa)). The interval 19–26 (GHVDHGKT) is G1. 19 to 26 (GHVDHGKT) provides a ligand contact to GTP. Thr26 contributes to the Mg(2+) binding site. The interval 60 to 64 (GITIS) is G2. The segment at 81-84 (DCPG) is G3. GTP contacts are provided by residues 81 to 85 (DCPGH) and 136 to 139 (NKVD). The segment at 136-139 (NKVD) is G4. The segment at 174–176 (SAL) is G5.

It belongs to the TRAFAC class translation factor GTPase superfamily. Classic translation factor GTPase family. EF-Tu/EF-1A subfamily. In terms of assembly, monomer.

It localises to the cytoplasm. The enzyme catalyses GTP + H2O = GDP + phosphate + H(+). GTP hydrolase that promotes the GTP-dependent binding of aminoacyl-tRNA to the A-site of ribosomes during protein biosynthesis. This is Elongation factor Tu from Pelagibacter ubique (strain HTCC1062).